A 410-amino-acid polypeptide reads, in one-letter code: Succinyl-CoA:(R)-benzylsuccinate CoA-transferase subunit BbsE (410 aa).

Belongs to the CoA-transferase III family. In terms of assembly, heterotetramer composed of 2 BbsE subunits and 2 BbsF subunits.

It catalyses the reaction (R)-2-benzylsuccinate + succinyl-CoA = (R)-2-benzylsuccinyl-CoA + succinate. The protein operates within xenobiotic degradation; toluene degradation. With respect to regulation, inhibited by (S)-benzylsuccinyl-CoA. In terms of biological role, catalyzes the reversible conversion of (R)-2-benzylsuccinate to (R)-2-benzylsuccinyl-CoA. Inactive with (S)-benzylsuccinate. The sequence is that of Succinyl-CoA:(R)-benzylsuccinate CoA-transferase subunit BbsE (bbsE) from Thauera aromatica.